The sequence spans 350 residues: Transmembrane protein 185A (350 aa).

The next 7 helical transmembrane spans lie at 16–36 (LIYA…DGII), 41–61 (WAVF…ASVG), 81–101 (FKAM…EVLV), 111–131 (FWLL…AACV), 177–197 (ILMS…VLFL), 211–231 (ITMA…EILL), and 240–260 (AFSC…LMAT). The interval 298–350 (DLHHEDNEETEETPVPEPPKIAPMFRKKARVVITQSPGKYALPPPKLNIEMPD) is mediates interaction with MAP1B.

Belongs to the TMEM185 family. As to quaternary structure, interacts with MAP1B.

The protein resides in the cell projection. The protein localises to the dendrite. Its subcellular location is the membrane. The chain is Transmembrane protein 185A (TMEM185A) from Pongo abelii (Sumatran orangutan).